Consider the following 471-residue polypeptide: V-type ATP synthase beta chain (471 aa).

Belongs to the ATPase alpha/beta chains family.

Produces ATP from ADP in the presence of a proton gradient across the membrane. The V-type beta chain is a regulatory subunit. This is V-type ATP synthase beta chain from Streptococcus pyogenes serotype M28 (strain MGAS6180).